A 110-amino-acid chain; its full sequence is Iron-sulfur cluster assembly protein CyaY (110 aa).

This sequence belongs to the frataxin family.

Functionally, involved in iron-sulfur (Fe-S) cluster assembly. May act as a regulator of Fe-S biogenesis. This Pseudomonas putida (strain GB-1) protein is Iron-sulfur cluster assembly protein CyaY.